A 519-amino-acid chain; its full sequence is Putative thymidine phosphorylase (519 aa).

This sequence belongs to the thymidine/pyrimidine-nucleoside phosphorylase family. Type 2 subfamily.

It carries out the reaction thymidine + phosphate = 2-deoxy-alpha-D-ribose 1-phosphate + thymine. The chain is Putative thymidine phosphorylase from Maricaulis maris (strain MCS10) (Caulobacter maris).